The chain runs to 406 residues: Putative F-box protein At5g38270 (406 aa).

The F-box domain maps to 20–67 (HDWSKLCPDILRSILESLSSTDFHRAKTVCSDWYSNWKTCVKPLCPWR).

This Arabidopsis thaliana (Mouse-ear cress) protein is Putative F-box protein At5g38270.